Reading from the N-terminus, the 434-residue chain is MTVKTETAAGASTLTYSKMRGMVALLIAFMKQRRMGLNDFIQKIATNSSYACKPSEVQSILNISPPQEPELLNENSSPPPSPSQQINLGPSSNPHAKPSDFQFLKIIGKGSFGKVLLARHQADEKFYAVKVLQKKAILKKKEEKHIMSERNVLLKNVKHPFLVGLHFSFQTTSRLYFILDYINGGELFYHLQRERCFLEPRARFYAAEIASALGYLHSLNIVYRDLKPENILLDSQGHIVLTDFGLCKENIEPNGTTSTFCGTPEYLAPEVLHKQPYDRTVDWWCLGAVLYEMLYGLPPFYSRNTAEMYDNILNKPLQLKPNITNSARNLLEGLLQKDRTKRIGAKNDFMEIKNHIFFSPINWDDLINKKITPPFNPNVSGPSDLQHFDPEFTEEPVPNSIGQSPDSILITASIKEAAEAFMGFSYAPPMESYL.

Residues 66–94 (PQEPELLNENSSPPPSPSQQINLGPSSNP) are disordered. The segment covering 84–94 (QQINLGPSSNP) has biased composition (polar residues). Residues 101–358 (FQFLKIIGKG…FMEIKNHIFF (258 aa)) form the Protein kinase domain. ATP-binding positions include 107–115 (IGKGSFGKV) and Lys130. The active-site Proton acceptor is Asp225. Residues 359–434 (SPINWDDLIN…SYAPPMESYL (76 aa)) form the AGC-kinase C-terminal domain.

It belongs to the protein kinase superfamily. AGC Ser/Thr protein kinase family.

It is found in the cytoplasm. The protein resides in the nucleus. The protein localises to the endoplasmic reticulum. The enzyme catalyses L-seryl-[protein] + ATP = O-phospho-L-seryl-[protein] + ADP + H(+). It catalyses the reaction L-threonyl-[protein] + ATP = O-phospho-L-threonyl-[protein] + ADP + H(+). In terms of biological role, protein kinase that may play an important role in cellular stress response. Plays an important role in activating certain potassium, sodium, and chloride channels, suggesting an involvement in the regulation of processes such as cell survival, neuronal excitability, and renal sodium excretion. This is Serine/threonine-protein kinase Sgk1-A (sgk1-a) from Xenopus laevis (African clawed frog).